Consider the following 216-residue polypeptide: Transmembrane emp24 domain-containing protein eca (216 aa).

The signal sequence occupies residues 1–20 (MRDQFISLALILCVLHSACG). The Lumenal portion of the chain corresponds to 21-182 (LYFHISETER…FRHTSESTNS (162 aa)). A GOLD domain is found at 30-126 (RKCFIEEVPD…QLRVHLDIQV (97 aa)). The stretch at 134 to 164 (AHVAQKEKLTELQLRIRQLLDQVEQITKEQN) forms a coiled coil. The helical transmembrane segment at 183-203 (RVLWWSLAQTVVLVCMGFWQM) threads the bilayer. The Cytoplasmic segment spans residues 204 to 216 (RHLKSFFEAKKLV). A Prevents secretion from ER motif is present at residues 213–216 (KKLV).

Belongs to the EMP24/GP25L family.

The protein resides in the endoplasmic reticulum membrane. Its function is as follows. Eca and bai are essential, though not redundant, for dorsoventral patterning of the embryo. Specifically required during early embryogenesis for the activity of maternal tkv, while the zygotic tkv is not affected. Involved in Golgi organization. In Drosophila melanogaster (Fruit fly), this protein is Transmembrane emp24 domain-containing protein eca.